Consider the following 104-residue polypeptide: Protein enhancer of rudimentary (104 aa).

Threonine 18 carries the post-translational modification Phosphothreonine; by CK2. The residue at position 24 (serine 24) is a Phosphoserine; by CK2.

It belongs to the E(R) family.

In terms of biological role, acts as an enhancer of the rudimentary gene. Has a role in pyrimidine biosynthesis and the cell cycle. This chain is Protein enhancer of rudimentary (e(r)), found in Drosophila virilis (Fruit fly).